The sequence spans 141 residues: Large ribosomal subunit protein uL16 (141 aa).

It belongs to the universal ribosomal protein uL16 family. In terms of assembly, part of the 50S ribosomal subunit.

Functionally, binds 23S rRNA and is also seen to make contacts with the A and possibly P site tRNAs. This Hydrogenobaculum sp. (strain Y04AAS1) protein is Large ribosomal subunit protein uL16.